The chain runs to 155 residues: MNPLIDVRVQRLPHSDGLPLPRYETSGAAGMDLIAALPEGEPMVLAPGERAMVPTGLAIALPQGFEAQVRPRSGLAAKNGVTVLNSPGTVDCDYRGEVKVILINHGADAFTIERGTRIAQMVVSPVTQARFEEVETLDETARGAGGFGSTGTKGR.

Residues Arg-72–Gly-74, Asn-85, Thr-89–Asp-91, and Lys-99 contribute to the substrate site.

The protein belongs to the dUTPase family. It depends on Mg(2+) as a cofactor.

The enzyme catalyses dUTP + H2O = dUMP + diphosphate + H(+). The protein operates within pyrimidine metabolism; dUMP biosynthesis; dUMP from dCTP (dUTP route): step 2/2. Functionally, this enzyme is involved in nucleotide metabolism: it produces dUMP, the immediate precursor of thymidine nucleotides and it decreases the intracellular concentration of dUTP so that uracil cannot be incorporated into DNA. This is Deoxyuridine 5'-triphosphate nucleotidohydrolase from Parvibaculum lavamentivorans (strain DS-1 / DSM 13023 / NCIMB 13966).